The sequence spans 552 residues: Chaperonin GroEL 3 (552 aa).

ATP-binding positions include 30-33, Lys51, 87-91, Gly415, and Asp495; these read TLGP and DGTTT.

This sequence belongs to the chaperonin (HSP60) family. In terms of assembly, forms a cylinder of 14 subunits composed of two heptameric rings stacked back-to-back. Interacts with the co-chaperonin GroES.

It is found in the cytoplasm. The catalysed reaction is ATP + H2O + a folded polypeptide = ADP + phosphate + an unfolded polypeptide.. In terms of biological role, together with its co-chaperonin GroES, plays an essential role in assisting protein folding. The GroEL-GroES system forms a nano-cage that allows encapsulation of the non-native substrate proteins and provides a physical environment optimized to promote and accelerate protein folding. This is Chaperonin GroEL 3 from Mesorhizobium japonicum (strain LMG 29417 / CECT 9101 / MAFF 303099) (Mesorhizobium loti (strain MAFF 303099)).